The chain runs to 230 residues: MDKKEQDRLKKEAAEKAANMVQSGMILGVGTGSTVAFFIDALGKRKDEEDLKLKAIVTTSNRSKKQLESLGFEVSELADIDQADLTVDGSDRVADNLDGIKGGGGALTLEKNVAINSKKIVWIVDESKLVHRLSGFPLPVEVLPISCEQNFRRFEQEGLKPQWRTDGDKRYITHYGNYIIDLAVDPIPAPHGLADYLDHTVGVVEHGLFLDMCDEVIIAHSDGTIEDKIK.

Residues 31–34, 88–91, and 101–104 each bind substrate; these read TGST, DGSD, and KGGG. The Proton acceptor role is filled by E110. Residue K128 coordinates substrate.

It belongs to the ribose 5-phosphate isomerase family. As to quaternary structure, homodimer.

It catalyses the reaction aldehydo-D-ribose 5-phosphate = D-ribulose 5-phosphate. It participates in carbohydrate degradation; pentose phosphate pathway; D-ribose 5-phosphate from D-ribulose 5-phosphate (non-oxidative stage): step 1/1. Catalyzes the reversible conversion of ribose-5-phosphate to ribulose 5-phosphate. This is Ribose-5-phosphate isomerase A from Lactobacillus acidophilus (strain ATCC 700396 / NCK56 / N2 / NCFM).